Here is a 184-residue protein sequence, read N- to C-terminus: dCTP deaminase (184 aa).

DCTP is bound at residue 107–112; that stretch reads KSTIAR. The Proton donor/acceptor role is filled by glutamate 133. DCTP is bound by residues glutamine 152, tyrosine 166, and glutamine 176.

This sequence belongs to the dCTP deaminase family. In terms of assembly, homotrimer.

The enzyme catalyses dCTP + H2O + H(+) = dUTP + NH4(+). It functions in the pathway pyrimidine metabolism; dUMP biosynthesis; dUMP from dCTP (dUTP route): step 1/2. Functionally, catalyzes the deamination of dCTP to dUTP. The chain is dCTP deaminase from Roseiflexus castenholzii (strain DSM 13941 / HLO8).